Consider the following 641-residue polypeptide: Epithelial sodium channel subunit beta (641 aa).

Residues 1-50 (MHLKKYLLKGLHRLQKGPGYSYKELLVWYCNNTNTHGPKRIICEGPKKKA) lie on the Cytoplasmic side of the membrane. A helical membrane pass occupies residues 51–71 (MWFLITLLFTSLVCWQWGVFI). Topologically, residues 72 to 533 (RTYLSWEVSV…GGQFGFWMGG (462 aa)) are extracellular. 9 disulfides stabilise this stretch: Cys-98–Cys-273, Cys-185–Cys-190, Cys-197–Cys-204, Cys-250–Cys-257, Cys-362–Cys-449, Cys-387–Cys-445, Cys-391–Cys-441, Cys-400–Cys-427, and Cys-402–Cys-416. Asn-141 carries N-linked (GlcNAc...) asparagine glycosylation. Residue Asn-261 is glycosylated (N-linked (GlcNAc...) asparagine). Residues 534 to 554 (SVLCLIEFGEILIDFVWITII) traverse the membrane as a helical segment. Residues 555-641 (KLVAFAKSLR…IESDSEGDAI (87 aa)) are Cytoplasmic-facing. The disordered stretch occupies residues 593 to 624 (PDVARPGPDPGTYPDEQTLPIPGTPPPNYDSL). The short motif at 617-621 (PPPNY) is the PY motif; recruits WW domain-containing proteins and is thereby required for ubiquitination and inhibition of the channel by NEDD4 and NEDD4L element. A phosphoserine mark is found at Ser-634 and Ser-636.

Belongs to the amiloride-sensitive sodium channel (TC 1.A.6) family. SCNN1B subfamily. As to quaternary structure, component of the heterotrimeric epithelial sodium channel (ENaC) composed of an alpha/SCNN1A, a beta/SCNN1B and a gamma/SCNN1G subunit. An additional delta/SCNN1D subunit can replace the alpha/SCNN1A subunit to form an alternative channel with specific properties. Interacts with WWP1 (via WW domains). Interacts with WWP2 (via WW domains); inhibits the channel. Interacts with the full-length immature form of PCSK9 (pro-PCSK9). Interacts (N-glycosylated) with BPIFA1; the interaction is direct and inhibits the proteolytic processing of SCNN1A and SCNN1G and the activation of ENaC. Ubiquitinated. Can be ubiquitinated at multiple sites and undergo monoubiquitination and polyubiquitination. Ubiquitination by NEDD4 or NEDD4L inhibits the ENaC channel through endocytosis, intracellular retention and degradation of its individual subunits. However, some studies could not confirm the ubiquitination of this subunit of the ENaC. Post-translationally, phosphorylated on serine and threonine residues. Aldosterone and insulin increase the basal level of phosphorylation. In terms of processing, N-glycosylated. N-glycosylation is required for interaction with BPIFA1.

It localises to the apical cell membrane. The protein resides in the cytoplasmic vesicle membrane. It carries out the reaction Na(+)(in) = Na(+)(out). Originally identified and characterized by its inhibition by the diuretic drug amiloride. Functionally, this is one of the three pore-forming subunits of the heterotrimeric epithelial sodium channel (ENaC), a critical regulator of sodium balance and fluid homeostasis. ENaC operates in epithelial tissues, where it mediates the electrodiffusion of sodium ions from extracellular fluid through the apical membrane of cells, with water following osmotically. It plays a key role in maintaining sodium homeostasis through electrogenic sodium reabsorption in the kidneys. Additionally, ENaC is essential for airway surface liquid homeostasis, which is crucial for proper mucus clearance. This chain is Epithelial sodium channel subunit beta, found in Canis lupus familiaris (Dog).